Consider the following 159-residue polypeptide: Ribosome maturation factor RimP (159 aa).

This sequence belongs to the RimP family.

Its subcellular location is the cytoplasm. Its function is as follows. Required for maturation of 30S ribosomal subunits. The protein is Ribosome maturation factor RimP of Streptococcus agalactiae serotype III (strain NEM316).